The sequence spans 301 residues: uncharacterized protein (301 aa).

Catalysis depends on charge relay system residues Ser44 and Tyr107. Tyr133 (proton donor) is an active-site residue. Lys162 serves as the catalytic Schiff-base intermediate with substrate.

The protein belongs to the DapA family. In terms of assembly, homotetramer.

Its subcellular location is the cytoplasm. This is an uncharacterized protein from Pyrobaculum aerophilum (strain ATCC 51768 / DSM 7523 / JCM 9630 / CIP 104966 / NBRC 100827 / IM2).